A 63-amino-acid chain; its full sequence is MKILCFFIVLLFVAVHGAVGFSRSPRYHMQCGYRGTFCTPGKCPHGNAYLGLCRPKYSCCRWL.

The N-terminal stretch at 1–19 (MKILCFFIVLLFVAVHGAV) is a signal peptide. A propeptide spanning residues 20–25 (GFSRSP) is cleaved from the precursor. 3 disulfides stabilise this stretch: Cys-31/Cys-59, Cys-38/Cys-53, and Cys-43/Cys-60.

It belongs to the beta-defensin family. Strong expression in the bone marrow and testis. Widely expressed. Weak expression in the ovarian stroma, but not expressed in the ovarian follicles.

The protein localises to the secreted. Its subcellular location is the cytoplasmic granule. Its function is as follows. Has bactericidal activity. Potent activity against S.typhimurium and S.entiriditis. This Gallus gallus (Chicken) protein is Gallinacin-4 (GAL4).